A 431-amino-acid chain; its full sequence is Protein translocase subunit SecY 1 (431 aa).

Transmembrane regions (helical) follow at residues 18 to 38 (IYFT…TVPG), 67 to 87 (YSIF…IQLL), 115 to 135 (YLTL…FNAL), 150 to 170 (VEIA…GDEI), 178 to 198 (GVSV…LYQI), 215 to 235 (ILFF…VTWV), 268 to 288 (VIPV…LMAF), 312 to 332 (GVII…FVQV), 365 to 385 (LIKL…LPQL), and 392 to 412 (LPSS…VVLE).

This sequence belongs to the SecY/SEC61-alpha family. In terms of assembly, component of the Sec protein translocase complex. Heterotrimer consisting of SecY, SecE and SecG subunits. The heterotrimers can form oligomers, although 1 heterotrimer is thought to be able to translocate proteins. Interacts with the ribosome. Interacts with SecDF, and other proteins may be involved. Interacts with SecA.

The protein localises to the cell membrane. The central subunit of the protein translocation channel SecYEG. Consists of two halves formed by TMs 1-5 and 6-10. These two domains form a lateral gate at the front which open onto the bilayer between TMs 2 and 7, and are clamped together by SecE at the back. The channel is closed by both a pore ring composed of hydrophobic SecY resides and a short helix (helix 2A) on the extracellular side of the membrane which forms a plug. The plug probably moves laterally to allow the channel to open. The ring and the pore may move independently. This is Protein translocase subunit SecY 1 from Lactobacillus kefiranofaciens subsp. kefiranofaciens.